The chain runs to 287 residues: Orotidine 5'-phosphate decarboxylase (287 aa).

K99 functions as the Proton donor in the catalytic mechanism.

Belongs to the OMP decarboxylase family. Type 2 subfamily.

The catalysed reaction is orotidine 5'-phosphate + H(+) = UMP + CO2. It functions in the pathway pyrimidine metabolism; UMP biosynthesis via de novo pathway; UMP from orotate: step 2/2. The sequence is that of Orotidine 5'-phosphate decarboxylase from Clostridium novyi (strain NT).